The following is a 270-amino-acid chain: Indole-3-glycerol phosphate synthase (270 aa).

The protein belongs to the TrpC family.

The enzyme catalyses 1-(2-carboxyphenylamino)-1-deoxy-D-ribulose 5-phosphate + H(+) = (1S,2R)-1-C-(indol-3-yl)glycerol 3-phosphate + CO2 + H2O. The protein operates within amino-acid biosynthesis; L-tryptophan biosynthesis; L-tryptophan from chorismate: step 4/5. The sequence is that of Indole-3-glycerol phosphate synthase from Salinibacter ruber (strain DSM 13855 / M31).